The following is a 118-amino-acid chain: Autophagy-related protein 8 (118 aa).

The Phosphatidylethanolamine amidated glycine moiety is linked to residue Gly-116. A propeptide spans 117-118 (EA) (removed in mature form).

The protein belongs to the ATG8 family. In terms of assembly, conjugation to phosphatidylethanolamine (PE) leads to homodimerization. Interacts with ATG1, ATG3, ATG4, ATG7 and ATG12. In terms of processing, the C-terminal Glu-117 and Ala-118 residues of ATG8 are removed by ATG4 to expose Gly-116 at the C-terminus. This Gly-116 forms then a thioester bond with the 'Cys-550' of ATG7 (E1-like activating enzyme) before being transferred to the 'Cys-244' of ATG3 (the specific E2 conjugating enzyme), in order to be finally amidated with phosphatidylethanolamine. This lipid modification anchors ATG8 to membranes and can be reversed by ATG4, releasing soluble ATG8.

It is found in the cytoplasmic vesicle. Its subcellular location is the cvt vesicle membrane. The protein resides in the autophagosome membrane. It localises to the vacuole membrane. In terms of biological role, ubiquitin-like modifier involved in cytoplasm to vacuole transport (Cvt) vesicles and autophagosome formation. With ATG4, mediates the delivery of the vesicles and autophagosomes to the vacuole via the microtubule cytoskeleton. Required for selective autophagic degradation of the nucleus (nucleophagy) as well as for mitophagy which contributes to regulate mitochondrial quantity and quality by eliminating the mitochondria to a basal level to fulfill cellular energy requirements and preventing excess ROS production. Also participates in membrane fusion events that take place in the early secretory pathway. Also involved in endoplasmic reticulum-specific autophagic process and is essential for the survival of cells subjected to severe ER stress. The ATG8-PE conjugate mediates tethering between adjacent membranes and stimulates membrane hemifusion, leading to expansion of the autophagosomal membrane during autophagy. Moreover not only conjugation, but also subsequent ATG8-PE deconjugation is an important step required to facilitate multiple events during macroautophagy, and especially for efficient autophagosome biogenesis, the assembly of ATG9-containing tubulovesicular clusters into phagophores/autophagosomes, and for the disassembly of PAS-associated ATG components. Autophagy is required for proper vegetative growth, asexual/sexual reproduction, and full virulence. Autophagy is particularly involved in the biosynthesis of deoxynivalenol (DON), an important virulence determinant. The protein is Autophagy-related protein 8 of Gibberella zeae (strain ATCC MYA-4620 / CBS 123657 / FGSC 9075 / NRRL 31084 / PH-1) (Wheat head blight fungus).